Here is an 81-residue protein sequence, read N- to C-terminus: Sulfur carrier protein TusA (81 aa).

The Cysteine persulfide intermediate role is filled by Cys-19.

It belongs to the sulfur carrier protein TusA family.

It localises to the cytoplasm. Sulfur carrier protein which probably makes part of a sulfur-relay system. The sequence is that of Sulfur carrier protein TusA from Shewanella denitrificans (strain OS217 / ATCC BAA-1090 / DSM 15013).